The following is a 294-amino-acid chain: NAD kinase (294 aa).

The active-site Proton acceptor is aspartate 73. NAD(+) is bound by residues 73-74 (DG), 147-148 (NE), histidine 158, arginine 175, aspartate 177, 188-193 (TAYSLS), and glutamine 249.

The protein belongs to the NAD kinase family. Requires a divalent metal cation as cofactor.

It localises to the cytoplasm. The catalysed reaction is NAD(+) + ATP = ADP + NADP(+) + H(+). In terms of biological role, involved in the regulation of the intracellular balance of NAD and NADP, and is a key enzyme in the biosynthesis of NADP. Catalyzes specifically the phosphorylation on 2'-hydroxyl of the adenosine moiety of NAD to yield NADP. This Aeromonas salmonicida (strain A449) protein is NAD kinase.